The sequence spans 185 residues: Lactoylglutathione lyase (185 aa).

The disordered stretch occupies residues 1 to 21; it reads MASEAKESPANNPGLSTVRDE. The region spanning 27–174 is the VOC domain; it reads IMQQTMFRVK…DGYWIEIFDL (148 aa). Residues Gln-30 and Arg-34 each coordinate substrate. A Zn(2+)-binding site is contributed by Gln-30. A Zn(2+)-binding site is contributed by Glu-96. Residues Asn-100, Arg-120, His-124, and 154-155 each bind substrate; that span reads KM. His-124 lines the Zn(2+) pocket. A Zn(2+)-binding site is contributed by Glu-170. The active-site Proton donor/acceptor is Glu-170.

It belongs to the glyoxalase I family. Requires Zn(2+) as cofactor.

It carries out the reaction (R)-S-lactoylglutathione = methylglyoxal + glutathione. It participates in secondary metabolite metabolism; methylglyoxal degradation; (R)-lactate from methylglyoxal: step 1/2. In terms of biological role, catalyzes the conversion of hemimercaptal, formed from methylglyoxal and glutathione, to S-lactoylglutathione. The chain is Lactoylglutathione lyase (GLY I) from Brassica juncea (Indian mustard).